Reading from the N-terminus, the 305-residue chain is Dihydroorotate dehydrogenase B (NAD(+)), catalytic subunit (305 aa).

FMN-binding positions include Ser20 and 44–45 (KG). Substrate contacts are provided by residues Lys44 and 68–72 (NAIGI). FMN is bound by residues Asn98 and Asn126. Asn126 lines the substrate pocket. Cys129 acts as the Nucleophile in catalysis. 2 residues coordinate FMN: Lys165 and Ile191. 192–193 (NT) provides a ligand contact to substrate. Residues Gly217, 243-244 (GG), and 265-266 (GT) contribute to the FMN site.

Belongs to the dihydroorotate dehydrogenase family. Type 1 subfamily. As to quaternary structure, heterotetramer of 2 PyrK and 2 PyrD type B subunits. It depends on FMN as a cofactor.

The protein resides in the cytoplasm. It carries out the reaction (S)-dihydroorotate + NAD(+) = orotate + NADH + H(+). Its pathway is pyrimidine metabolism; UMP biosynthesis via de novo pathway; orotate from (S)-dihydroorotate (NAD(+) route): step 1/1. In terms of biological role, catalyzes the conversion of dihydroorotate to orotate with NAD(+) as electron acceptor. The chain is Dihydroorotate dehydrogenase B (NAD(+)), catalytic subunit (pyrD) from Maridesulfovibrio salexigens (strain ATCC 14822 / DSM 2638 / NCIMB 8403 / VKM B-1763) (Desulfovibrio salexigens).